A 254-amino-acid polypeptide reads, in one-letter code: Cell wall biogenesis protein NCW2 (254 aa).

The N-terminal stretch at 1–17 (MKACSILFTTLITLAAA) is a signal peptide. 3 disordered regions span residues 19 to 57 (KDSGSLDGQNSEDSSQKESSNSQEITPTTTKEAQESAST), 111 to 143 (TSTASVQPTGETSSGITNSASSSTTSTSTDGPV), and 167 to 191 (ATTDNTASSSKSSSGSSSKPESSTK). Residues 27–42 (QNSEDSSQKESSNSQE) are compositionally biased toward low complexity. Polar residues predominate over residues 43 to 57 (ITPTTTKEAQESAST). Residues 111 to 139 (TSTASVQPTGETSSGITNSASSSTTSTST) are compositionally biased toward low complexity. N-linked (GlcNAc...) asparagine glycosylation is present at Asn229. Asn232 carries GPI-anchor amidated asparagine lipidation. The propeptide at 233–254 (GAFAGTHIAYGAGAFAVGALLL) is removed in mature form.

The protein localises to the cell membrane. Its function is as follows. Cell wall biogenesis protein that participates in the organization of the beta-glucan assembly. Involved in the mechanism responsible for cell tolerance to polyhexamethylene biguanide (PHMB), an antifungal agent. In Saccharomyces cerevisiae (strain ATCC 204508 / S288c) (Baker's yeast), this protein is Cell wall biogenesis protein NCW2.